Consider the following 516-residue polypeptide: GMP synthase [glutamine-hydrolyzing] (516 aa).

The Glutamine amidotransferase type-1 domain maps to 6–199 (KVLILDFGSQ…LFEIAGLTSG (194 aa)). Cys83 functions as the Nucleophile in the catalytic mechanism. Residues His173 and Glu175 contribute to the active site. Positions 200-391 (WTMSSFLETE…LGMPDFIIWR (192 aa)) constitute a GMPS ATP-PPase domain. 227–233 (SGGVDST) serves as a coordination point for ATP.

Homodimer.

It carries out the reaction XMP + L-glutamine + ATP + H2O = GMP + L-glutamate + AMP + diphosphate + 2 H(+). Its pathway is purine metabolism; GMP biosynthesis; GMP from XMP (L-Gln route): step 1/1. Catalyzes the synthesis of GMP from XMP. In Solidesulfovibrio magneticus (strain ATCC 700980 / DSM 13731 / RS-1) (Desulfovibrio magneticus), this protein is GMP synthase [glutamine-hydrolyzing].